A 172-amino-acid polypeptide reads, in one-letter code: Ribosome maturation factor RimM (172 aa).

One can recognise a PRC barrel domain in the interval 96–168 (EGEFYYHQII…RVDVELMEGL (73 aa)).

The protein belongs to the RimM family. In terms of assembly, binds ribosomal protein uS19.

The protein localises to the cytoplasm. Functionally, an accessory protein needed during the final step in the assembly of 30S ribosomal subunit, possibly for assembly of the head region. Essential for efficient processing of 16S rRNA. May be needed both before and after RbfA during the maturation of 16S rRNA. It has affinity for free ribosomal 30S subunits but not for 70S ribosomes. This is Ribosome maturation factor RimM from Streptococcus pyogenes serotype M28 (strain MGAS6180).